The sequence spans 1251 residues: Cyclic nucleotide-gated channel beta-1 (1251 aa).

Disordered regions lie at residues 1-75 (MLGW…QETK), 121-151 (ITEDPAQILGHGSTGDTGCTDEPNEALEAQD), 172-252 (QPPK…TRDP), and 314-561 (EDAH…STNS). The Cytoplasmic portion of the chain corresponds to 1–656 (MLGWVQRVLP…SIDPLTNLMY (656 aa)). Residues 23-50 (EEEEVEPEPEMEAEVEPEPNPEEAETES) are compositionally biased toward acidic residues. Positions 238 to 247 (GSQAQTSSLP) are enriched in polar residues. A compositionally biased stretch (basic and acidic residues) spans 335-352 (EENKAVEKMPRELSRIEE). Acidic residues predominate over residues 353-373 (EKEDEEEEEEEEEEEEEEEVT). Residues 404–423 (KLWEEVGEEAKKEAEEKAKE) are compositionally biased toward basic and acidic residues. The span at 424-434 (EAEEVAEEEAE) shows a compositional bias: acidic residues. A compositionally biased stretch (basic and acidic residues) spans 435 to 446 (KEPQDWAETKEE). Positions 557-567 (ASTNSAIINDR) are calmodulin-binding CaM1. The IQ-like motif lies at 568 to 578 (LQELVKLFKER). Residues 585 to 619 (KLIDPDVTSDEESPKPSPAKKAPEPAPDTKPAEAE) form a disordered region. A helical transmembrane segment spans residues 657–678 (VLWLFFVVMAWNWNCWLIPVRW). At 679–687 (AFPYQTPDN) the chain is on the extracellular side. Residues 688–709 (IHHWLLMDYLCDLIYFLDITVF) form a helical membrane-spanning segment. At 710–724 (QTRLQFVRGGDIITD) the chain is on the cytoplasmic side. A helical membrane pass occupies residues 725 to 744 (KKDMRNNYLKSRRFKMDLLS). Residues 745–760 (LLPLDFLYLKVGVNPL) lie on the Extracellular side of the membrane. Residues 761–773 (LRLPRCLKYMAFF) form a helical membrane-spanning segment. Topologically, residues 774–785 (EFNSRLESILSK) are cytoplasmic. The helical transmembrane segment at 786–808 (AYVYRVIRTTAYLLYSLHLNSCL) threads the bilayer. The interval 786 to 885 (AYVYRVIRTT…IGQMRDVVGA (100 aa)) is ion conduction pathway. The Extracellular portion of the chain corresponds to 809-831 (YYWASAYQGLGSTHWVYDGVGNS). A run of 2 helical transmembrane segments spans residues 832 to 858 (YIRCYYFAVKTLITIGGLPDPKTLFEI) and 859 to 884 (VFQLLNYFTGVFAFSVMIGQMRDVVG). Residues 885 to 1251 (AATAGQTYYR…MPEEREEKAE (367 aa)) are Cytoplasmic-facing. A C-linker region spans residues 888–964 (AGQTYYRSCM…NIVSKVALFQ (77 aa)). Residues 968 to 1084 (RQMIFDMLKR…LLRKKARRML (117 aa)) are cyclic nucleotide-binding domain. 3',5'-cyclic GMP is bound by residues glycine 1029, glutamate 1030, serine 1032, arginine 1042, and threonine 1043. Arginine 1042 serves as a coordination point for 3',5'-cyclic AMP. The interval 1148 to 1154 (QQELVEQ) is calmodulin-binding CaM2. The interval 1151–1251 (LVEQAKSSQD…MPEEREEKAE (101 aa)) is disordered. The span at 1183 to 1203 (PPAPRTPPEPPGSPPSSPPPA) shows a compositional bias: pro residues. Basic and acidic residues predominate over residues 1242-1251 (MPEEREEKAE).

This sequence belongs to the cyclic nucleotide-gated cation channel (TC 1.A.1.5) family. CNGB1 subfamily. As to quaternary structure, the rod cyclic nucleotide-gated channel is a heterotetramer composed of CNGA1 and CNGB1 subunits with 3:1 stoichiometry. CNGA1:CNGB1 channel binds Ca(2+)-bound CALM1 via CaM1 and CaM2 regions of the CNGB1 subunit; this interaction modulates the affinity of the channel for cNMPs in response to intracellular Ca(2+) levels. The olfactory cyclic nucleotide-gated channel is a heterotetramer composed of CNGA2, CNGA4 and CNGB1 subunits with 2:1:1 stoichiometry.

It is found in the cell membrane. The protein resides in the cell projection. It localises to the cilium membrane. The enzyme catalyses Ca(2+)(in) = Ca(2+)(out). It catalyses the reaction Na(+)(in) = Na(+)(out). The catalysed reaction is K(+)(in) = K(+)(out). It carries out the reaction NH4(+)(in) = NH4(+)(out). The enzyme catalyses Rb(+)(in) = Rb(+)(out). It catalyses the reaction Li(+)(in) = Li(+)(out). The catalysed reaction is Cs(+)(in) = Cs(+)(out). Pore-forming subunit of the rod cyclic nucleotide-gated channel. Mediates rod photoresponses at dim light converting transient changes in intracellular cGMP levels into electrical signals. In the dark, cGMP levels are high and keep the channel open enabling a steady inward current carried by Na(+) and Ca(2+) ions that leads to membrane depolarization and neurotransmitter release from synaptic terminals. Upon photon absorption cGMP levels decline leading to channel closure and membrane hyperpolarization that ultimately slows neurotransmitter release and signals the presence of light, the end point of the phototransduction cascade. Pore-forming subunit of the olfactory cyclic nucleotide-gated channel. Operates in the cilia of olfactory sensory neurons where chemical stimulation of the odorant is converted to an electrical signal. Mediates odorant-induced cAMP-dependent Ca(2+) influx triggering neuron depolarization. The rise of intracellular Ca(2+) levels potentiates the olfactory response by activating Ca(2+)-dependent Cl(-) channels, but it also serves as a negative feedback signal to desensitize the channel for rapid adaptation to odorants. Conducts cGMP- and cAMP-gated ion currents, with permeability for monovalent and divalent cations. The selectivity for Ca(2+) over Na(+) increases with cGMP concentrations, whereas the selectivity among monovalent ions is independent of the cGMP levels. Its function is as follows. High affinity rod photoreceptor phosphodiesterase (PDE6)-binding protein that modulates its catalytic properties: it is a regulator of spontaneous activation of rod PDE6, thereby serving to lower rod photoreceptor 'dark noise' and allowing these sensory cells to operate at the single photon detection limit. The chain is Cyclic nucleotide-gated channel beta-1 from Homo sapiens (Human).